An 82-amino-acid chain; its full sequence is Putative defensin-like protein 191 (82 aa).

An N-terminal signal peptide occupies residues 1-28 (MAKSVNATGFITYMVIFLILTGISRVKA). 4 disulfides stabilise this stretch: C33-C79, C46-C65, C51-C74, and C55-C76.

The protein belongs to the DEFL family.

It is found in the secreted. In Arabidopsis thaliana (Mouse-ear cress), this protein is Putative defensin-like protein 191.